We begin with the raw amino-acid sequence, 153 residues long: D-aminoacyl-tRNA deacylase (153 aa).

The short motif at 142–143 is the Gly-cisPro motif, important for rejection of L-amino acids element; it reads GP.

This sequence belongs to the DTD family. Homodimer.

The protein resides in the cytoplasm. The enzyme catalyses glycyl-tRNA(Ala) + H2O = tRNA(Ala) + glycine + H(+). It catalyses the reaction a D-aminoacyl-tRNA + H2O = a tRNA + a D-alpha-amino acid + H(+). Its function is as follows. An aminoacyl-tRNA editing enzyme that deacylates mischarged D-aminoacyl-tRNAs. Also deacylates mischarged glycyl-tRNA(Ala), protecting cells against glycine mischarging by AlaRS. Acts via tRNA-based rather than protein-based catalysis; rejects L-amino acids rather than detecting D-amino acids in the active site. By recycling D-aminoacyl-tRNA to D-amino acids and free tRNA molecules, this enzyme counteracts the toxicity associated with the formation of D-aminoacyl-tRNA entities in vivo and helps enforce protein L-homochirality. This is D-aminoacyl-tRNA deacylase from Cupriavidus necator (strain ATCC 17699 / DSM 428 / KCTC 22496 / NCIMB 10442 / H16 / Stanier 337) (Ralstonia eutropha).